A 516-amino-acid chain; its full sequence is Multicopper oxidase CueO (516 aa).

Residues 1–28 constitute a signal peptide (tat-type signal); that stretch reads MQRRDFLKYSVALGVASALPLWSRAVFA. Plastocyanin-like domains follow at residues 55 to 165 and 227 to 292; these read GQST…IEDD and PRGW…DNKP. Residues His-101, His-103, His-141, and His-143 each contribute to the Cu cation site. The tract at residues 355-400 is methionine-rich region; it reads MDPMLDMMGMQMLMEKYGDQAMAGMDHSQMMGHMGHGNMNHMNHGG. Residues 402-516 enclose the Plastocyanin-like 3 domain; the sequence is FDFHHANKIN…DTGMMLGFTV (115 aa). The Cu cation site is built by His-443, His-446, His-448, His-499, Cys-500, His-501, and His-505.

This sequence belongs to the multicopper oxidase family. Monomer. Cu cation is required as a cofactor. Exported by the Tat system. The position of the signal peptide cleavage has been experimentally proven.

The protein resides in the periplasm. The enzyme catalyses 4 Cu(+) + O2 + 4 H(+) = 4 Cu(2+) + 2 H2O. Ferroxidase and phenoloxidase activities are enhanced considerably in the presence of excess copper ions. A labile regulatory copper ion near the T1 copper site is important for the copper associated activation of enzyme activity. Ag(+) acts as a potent inhibitor of oxidase activity by binding at Cu(+) binding sites, blocking Cu(+) substrate binding and oxidation. pPD oxidase activity is strongly inhibited by sodium azide, an inhibitor of the electron transfer. In terms of biological role, multicopper oxidase involved in copper homeostasis and copper tolerance under aerobic conditions. Is responsible for the oxidation of Cu(+) to the less harmful Cu(2+) in the periplasm, thereby preventing Cu(+) from entering the cytoplasm. Probably primarily functions as a cuprous oxidase in vivo. Functionally, in vitro, in the presence of excess copper ions, exhibits ferroxidase and phenoloxidase activities. Fe(2+) is an excellent substrate in the presence of excess Cu(2+), but is inactive in the absence of Cu(2+). Oxidizes the phenolate iron siderophores enterobactin, 2,3-dihydroxybenzoate (2,3-DHB) and 3-hydroxyanthranilate (3-HAA). Oxidation and thus inactivation of enterobactin could protect cells from the interaction of enterobactin with copper and play a central role as an interface between copper detoxification and iron homeostasis. Also oxidizes a variety of phenolic model substrates, including 2,2'-azinobis(3-ethylbenzthiazolinesulfonic acid) (ABTS), p-phenylenediamine (pPD), 2,6-dimethoxyphenol (2,6-DMP) and 3,4-dihydroxybenzoic acid (3,4-DHB). In Escherichia coli (strain K12), this protein is Multicopper oxidase CueO.